We begin with the raw amino-acid sequence, 81 residues long: UPF0349 protein SE_0633 (81 aa).

Belongs to the UPF0349 family.

The chain is UPF0349 protein SE_0633 from Staphylococcus epidermidis (strain ATCC 12228 / FDA PCI 1200).